The following is a 291-amino-acid chain: Protease HtpX homolog (291 aa).

A run of 2 helical transmembrane segments spans residues 4–24 (IVLFLLTNFAVILVLSISARL) and 38–58 (MGMLLAFAALIGFGGSFISLM). Position 144 (H144) interacts with Zn(2+). The active site involves E145. H148 is a binding site for Zn(2+). 2 helical membrane-spanning segments follow: residues 152-172 (GDMVTLTLIQGVVNTFVIFLA) and 199-219 (VSSIAFEIMFGILASIVVMFF). A Zn(2+)-binding site is contributed by E224.

It belongs to the peptidase M48B family. Zn(2+) serves as cofactor.

It localises to the cell inner membrane. The protein is Protease HtpX homolog of Prosthecochloris aestuarii (strain DSM 271 / SK 413).